A 43-amino-acid polypeptide reads, in one-letter code: Protein PsbN (43 aa).

Residues 5-27 (TLVAISISGSLVSFTGYALYTAF) traverse the membrane as a helical segment.

The protein belongs to the PsbN family.

Its subcellular location is the plastid. It localises to the chloroplast thylakoid membrane. May play a role in photosystem I and II biogenesis. The polypeptide is Protein PsbN (Drimys granadensis).